The chain runs to 1330 residues: DNA-directed RNA polymerase subunit beta'' (1330 aa).

Zn(2+)-binding residues include cysteine 214, cysteine 282, cysteine 289, and cysteine 292.

Belongs to the RNA polymerase beta' chain family. RpoC2 subfamily. As to quaternary structure, in plastids the minimal PEP RNA polymerase catalytic core is composed of four subunits: alpha, beta, beta', and beta''. When a (nuclear-encoded) sigma factor is associated with the core the holoenzyme is formed, which can initiate transcription. It depends on Zn(2+) as a cofactor.

Its subcellular location is the plastid. It localises to the chloroplast. The catalysed reaction is RNA(n) + a ribonucleoside 5'-triphosphate = RNA(n+1) + diphosphate. DNA-dependent RNA polymerase catalyzes the transcription of DNA into RNA using the four ribonucleoside triphosphates as substrates. This is DNA-directed RNA polymerase subunit beta'' from Physcomitrium patens (Spreading-leaved earth moss).